Reading from the N-terminus, the 372-residue chain is 2,7-anhydro-N-acetylneuraminate hydratase (372 aa).

The NAD(+) site is built by tyrosine 11, phenylalanine 12, aspartate 33, asparagine 36, threonine 68, asparagine 70, histidine 73, glutamate 90, lysine 91, and tryptophan 160.

The protein belongs to the Gfo/Idh/MocA family. As to quaternary structure, homodimer. NAD(+) is required as a cofactor.

The catalysed reaction is N-acetyl-2,7-anhydro-alpha-neuraminate + H2O = N-acetyl-alpha-neuraminate. The enzyme catalyses 2-deoxy-2,3-dehydro-N-acetylneuraminate + H2O = N-acetyl-alpha-neuraminate. With respect to regulation, all conversions require NAD(+) as a cofactor, which is regenerated in the reaction. The presence of EGTA and several divalent cations does not affect the activity. Hydratase involved in the degradation of sialic acids. Catalyzes the reversible conversion of the dehydrated form of N-acetylneuraminate (Neu5Ac), 2,7-anhydro-N-acetylneuraminate (2,7-AN), to Neu5Ac. Also catalyzes the irreversible conversion of 2-deoxy-2,3-didehydro-N-acetylneuraminate (2,3-EN) to Neu5Ac. The reaction mechanism involves keto intermediates and the transient formation of NADH. This Escherichia coli (strain K12) protein is 2,7-anhydro-N-acetylneuraminate hydratase.